A 307-amino-acid polypeptide reads, in one-letter code: Protoheme IX farnesyltransferase (307 aa).

8 consecutive transmembrane segments (helical) span residues 32–52 (VVEL…RGIP), 54–74 (LWLV…AGAF), 105–125 (LVFA…FTNW), 126–146 (LAAG…TLIL), 169–189 (WAVV…VIFL), 222–242 (VVGL…LLLI), 244–264 (VARM…WFLY), and 287–307 (GSIA…LLPF).

This sequence belongs to the UbiA prenyltransferase family. Protoheme IX farnesyltransferase subfamily.

The protein resides in the cell membrane. It carries out the reaction heme b + (2E,6E)-farnesyl diphosphate + H2O = Fe(II)-heme o + diphosphate. It participates in porphyrin-containing compound metabolism; heme O biosynthesis; heme O from protoheme: step 1/1. Functionally, converts heme B (protoheme IX) to heme O by substitution of the vinyl group on carbon 2 of heme B porphyrin ring with a hydroxyethyl farnesyl side group. In Leifsonia xyli subsp. xyli (strain CTCB07), this protein is Protoheme IX farnesyltransferase.